A 152-amino-acid polypeptide reads, in one-letter code: Large ribosomal subunit protein eL14 (152 aa).

This sequence belongs to the eukaryotic ribosomal protein eL14 family.

The protein is Large ribosomal subunit protein eL14 (RPL14) of Lumbricus rubellus (Humus earthworm).